Here is an 88-residue protein sequence, read N- to C-terminus: UPF0250 protein Shewmr4_0986 (88 aa).

This sequence belongs to the UPF0250 family.

This is UPF0250 protein Shewmr4_0986 from Shewanella sp. (strain MR-4).